The following is a 785-amino-acid chain: B-cell scaffold protein with ankyrin repeats (785 aa).

Residues 1–154 (MLPAAPGKGL…DYISVIQSII (154 aa)) are interaction with ITPR2. A TIR domain is found at 25–153 (NTKDIIMIYE…EDYISVIQSI (129 aa)). One can recognise a DBB domain in the interval 200–327 (VLPTEIPCEN…EIPYYEFQSL (128 aa)). ANK repeat units lie at residues 342 to 371 (ELPT…ATWA) and 378 to 408 (EGSD…EIDI). Disordered regions lie at residues 433–480 (PAFH…SESS), 493–514 (GADP…LPPP), 538–578 (QMER…EDPY), and 606–625 (FIIN…PPKE). Positions 553–568 (ETGDEPKGEKEKKEEE) are enriched in basic and acidic residues. Residues 569–578 (KEQEEEEDPY) show a composition bias toward acidic residues. The segment covering 611–621 (PPAPTPRPTSI) has biased composition (pro residues).

As to quaternary structure, interacts with LYN, ITPR1 and ITPR2. Phosphorylated on tyrosines upon BCR activation. As to expression, expressed in B-cell but not T-cell or myeloid cell lines. Highest expression in CD19(+) B-cells, with very low expression in other cell populations.

Functionally, involved in B-cell receptor (BCR)-induced Ca(2+) mobilization from intracellular stores. Promotes Lyn-mediated phosphorylation of IP3 receptors 1 and 2. The protein is B-cell scaffold protein with ankyrin repeats (BANK1) of Homo sapiens (Human).